The sequence spans 659 residues: Sodium/nucleoside cotransporter 2 (659 aa).

Over residues 1–10 (MAKSEGRKSA) the composition is skewed to basic and acidic residues. Residues 1–22 (MAKSEGRKSASQDTSENGMENP) are disordered. A Phosphoserine modification is found at Ser-46. The next 14 membrane-spanning stretches (helical) occupy residues 81 to 101 (ILLGLLCLAYAAYLLAACILN), 105 to 124 (ALALFVITCLVIFILACHFL), 149 to 167 (KRVFMGAAVVGLILWLALD), 173 to 193 (EQLISFAGICMFILILFACSK), 201 to 221 (RTVFWGLGLQFVFGILVIRTE), 234 to 254 (IQIFLAYTVEGSSFVFGDTLV), 261 to 281 (QSLPIIIFFGCVMSILYYLGL), 296 to 315 (TMGTTAAETLAVAGNIFVGM), 337 to 356 (VMTGGFATIAGTVLGAFISF), 363 to 382 (LISASVMAAPCALALSKLVY), 424 to 444 (VAANLIAFLAVLAFINSTLSW), 455 to 475 (TFQVICSYVLRPMVFMMGVQW), 530 to 550 (ATFSLCGFANLTSIGITLGGL), and 568 to 588 (ALFTGACVSFISACMAGILYV).

This sequence belongs to the concentrative nucleoside transporter (CNT) (TC 2.A.41) family. In terms of tissue distribution, expressed in liver (in bile canalicular membrane vesicles (CMV) but not in sinusoidal vesicles), jejunum, spleen and heart. Also expressed in brain and skeletal muscle. Not expressed in kidney, muscle and lung.

It localises to the membrane. The protein localises to the apicolateral cell membrane. The catalysed reaction is adenosine(out) + Na(+)(out) = adenosine(in) + Na(+)(in). The enzyme catalyses inosine(out) + Na(+)(out) = inosine(in) + Na(+)(in). It catalyses the reaction guanosine(out) + Na(+)(out) = guanosine(in) + Na(+)(in). It carries out the reaction uridine(out) + Na(+)(out) = uridine(in) + Na(+)(in). Inhibited by formycin B, partially inhibited by purine analog ara-A. In terms of biological role, sodium-dependent and purine-selective. Exhibits the transport characteristics of the nucleoside transport system cif or N1 subtype (N1/cif) (selective for purine nucleosides and uridine). Accepts purine, analogs of purine nucleosides and uridine, and exhibits high affinity for adenosine. May contribute to regulate the transport of organic compounds in testes across the blood-testis-barrier. This chain is Sodium/nucleoside cotransporter 2 (Slc28a2), found in Rattus norvegicus (Rat).